A 412-amino-acid polypeptide reads, in one-letter code: Serine--tRNA ligase (412 aa).

228 to 230 (TAE) serves as a coordination point for L-serine. Residue 259–261 (RKE) participates in ATP binding. E282 contacts L-serine. Residue 346–349 (EISS) participates in ATP binding. Residue S380 participates in L-serine binding.

This sequence belongs to the class-II aminoacyl-tRNA synthetase family. Type-1 seryl-tRNA synthetase subfamily. Homodimer. The tRNA molecule binds across the dimer.

It localises to the cytoplasm. The catalysed reaction is tRNA(Ser) + L-serine + ATP = L-seryl-tRNA(Ser) + AMP + diphosphate + H(+). The enzyme catalyses tRNA(Sec) + L-serine + ATP = L-seryl-tRNA(Sec) + AMP + diphosphate + H(+). It functions in the pathway aminoacyl-tRNA biosynthesis; selenocysteinyl-tRNA(Sec) biosynthesis; L-seryl-tRNA(Sec) from L-serine and tRNA(Sec): step 1/1. Functionally, catalyzes the attachment of serine to tRNA(Ser). Is also able to aminoacylate tRNA(Sec) with serine, to form the misacylated tRNA L-seryl-tRNA(Sec), which will be further converted into selenocysteinyl-tRNA(Sec). This is Serine--tRNA ligase from Aliarcobacter butzleri (strain RM4018) (Arcobacter butzleri).